Consider the following 616-residue polypeptide: Pentatricopeptide repeat-containing protein At4g15720 (616 aa).

10 PPR repeats span residues 63 to 93, 94 to 128, 130 to 164, 165 to 199, 200 to 228, 235 to 269, 270 to 300, 301 to 335, 336 to 371, and 372 to 402; these read DTFTVNHLVISYVKLKEINTARKLFDEMCEP, NVVSWTSVISGYNDMGKPQNALSMFQKMHEDRPVP, NEYTFASVFKACSALAESRIGKNIHARLEISGLRR, NIVVSSSLVDMYGKCNDVETARRVFDSMIGYGRNV, VSWTSMITAYAQNARGHEAIELFRSFNAA, NQFMLASVISACSSLGRLQWGKVAHGLVTRGGYES, NTVVATSLLDMYAKCGSLSCAEKIFLRIRCH, SVISYTSMIMAKAKHGLGEAAVKLFDEMVAGRINP, NYVTLLGVLHACSHSGLVNEGLEYLSLMAEKYGVVP, and DSRHYTCVVDMLGRFGRVDEAYELAKTIEVG. Residues 409-484 are type E motif; that stretch reads LWGALLSAGR…ERACSWIENK (76 aa). The interval 485 to 515 is type E(+) motif; sequence DSVYVFHAGDLSCDESGEIERFLKDLEKRMK. Positions 522–616 are type DYW motif; the sequence is SSSMITTSSS…NGSCTCRDYW (95 aa).

The protein belongs to the PPR family. PCMP-H subfamily.

This chain is Pentatricopeptide repeat-containing protein At4g15720 (PCMP-H1), found in Arabidopsis thaliana (Mouse-ear cress).